A 420-amino-acid chain; its full sequence is Ketoreductase sphF (420 aa).

Positions M1–G21 are disordered. The helical transmembrane segment at W29–W49 threads the bilayer. The tract at residues R275 to D298 is disordered.

It is found in the membrane. The catalysed reaction is 3-oxopresphingofungin + NADPH + 2 H(+) = presphingofungin + NADP(+). It functions in the pathway secondary metabolite biosynthesis. Functionally, ketoreductase; part of the gene cluster that mediates the biosynthesis of sphingofungins, bioactive molecules acting as sphingolipid inhibitors via inhibiting serine palmitoyl transferase (SPT). Within the pathway, sphF catalyzes the reduction of the C-3 ketone of 3-keto-presphingofungin to produce presphingofungin. Sphingofungin biosynthesis starts with the PKS sphB that produces an C18 polyketide precursor 3-hydroxyoctadeca-4,10-dienoyl-ACP containing one delta-6 desaturation and one delta-12 desaturation. The aminoacyl transferase sphA uses the sphB product to produce 3-keto-presphingofungin by adding an aminomalonate molecule. SphF then reduces the C-3 ketone of 3-keto-presphingofungin which leads to presphingofungin. The cytochrome P450 monooxygenase sphH converts presphingofungin into sphingofungin B1 which is further converted to sphingofungin B by the dioxygenase sphC. SphC is also able to convert presphingofungin into sphingofungin B2. The acetyltransferase sphE acetylates sphingofungin B to produce sphingofungin C, but can also convert sphingofungin B1 into sphingofungin C1 and sphingofungin B2 into sphingofungin C2. Finally, sphingofungin C can be spontaneously converted into sphingofungin D. This is Ketoreductase sphF from Aspergillus fumigatus (strain CBS 144.89 / FGSC A1163 / CEA10) (Neosartorya fumigata).